A 93-amino-acid chain; its full sequence is U12-lycotoxin-Ls1e (93 aa).

The signal sequence occupies residues 1–18 (MKFAVILLFTLVVLAVAS). The propeptide occupies 19 to 38 (ESVEEDTREIDVEEFQEQQR).

Belongs to the neurotoxin 31 family. In terms of processing, contains 5 disulfide bonds. Expressed by the venom gland.

The protein resides in the secreted. The polypeptide is U12-lycotoxin-Ls1e (Lycosa singoriensis (Wolf spider)).